The chain runs to 264 residues: NADH dehydrogenase [ubiquinone] iron-sulfur protein 3, mitochondrial (264 aa).

The N-terminal 36 residues, 1–36 (MAAAAVARLWWRGILGASALTRGTGRPSVLLLPVRR), are a transit peptide targeting the mitochondrion.

Belongs to the complex I 30 kDa subunit family. As to quaternary structure, core subunit of respiratory chain NADH dehydrogenase (Complex I) which is composed of 45 different subunits. Interacts with NDUFAF3. Interacts with RAB5IF. Found in subcomplexes containing subunits NDUFS2, MT-ND1 and NDUFA13.

It is found in the mitochondrion inner membrane. It catalyses the reaction a ubiquinone + NADH + 5 H(+)(in) = a ubiquinol + NAD(+) + 4 H(+)(out). In terms of biological role, core subunit of the mitochondrial membrane respiratory chain NADH dehydrogenase (Complex I) which catalyzes electron transfer from NADH through the respiratory chain, using ubiquinone as an electron acceptor. Essential for the catalytic activity and assembly of complex I. The protein is NADH dehydrogenase [ubiquinone] iron-sulfur protein 3, mitochondrial (NDUFS3) of Pan troglodytes (Chimpanzee).